Consider the following 116-residue polypeptide: Large ribosomal subunit protein bL19 (116 aa).

This sequence belongs to the bacterial ribosomal protein bL19 family.

In terms of biological role, this protein is located at the 30S-50S ribosomal subunit interface and may play a role in the structure and function of the aminoacyl-tRNA binding site. The chain is Large ribosomal subunit protein bL19 from Magnetococcus marinus (strain ATCC BAA-1437 / JCM 17883 / MC-1).